We begin with the raw amino-acid sequence, 224 residues long: MAAPSEVAAIAPGEGDGGGGGFGSWLDGRLEALGVDRAVYGAYILGILQEEEEEEKLDALQGILSAFLEEDSLLNICKEIVERWSETQNVVTKVKKEDEVQAIATLIEKQAQIVVKPRMVSEEEKQRKAALLAQYADVTDEEDEADEKDDSGATTMNIGSDKLLFRNTNVEDVLNARKLERDSLRDESQRKKEQDKLQRERDKLAKQERKEKEKKRTQRGERKR.

Residue Lys95 forms a Glycyl lysine isopeptide (Lys-Gly) (interchain with G-Cter in SUMO1) linkage. Coiled-coil stretches lie at residues 121-145 (SEEEKQRKAALLAQYADVTDEEDEA) and 177-218 (RKLE…KRTQ). Residues 138–149 (VTDEEDEADEKD) show a composition bias toward acidic residues. Disordered stretches follow at residues 138–157 (VTDEEDEADEKDDSGATTMN) and 176–224 (ARKL…ERKR). A Phosphothreonine modification is found at Thr139. Residues 176–211 (ARKLERDSLRDESQRKKEQDKLQRERDKLAKQERKE) show a composition bias toward basic and acidic residues. Residues 212–224 (KEKKRTQRGERKR) show a composition bias toward basic residues.

It belongs to the CCDC43 family.

The sequence is that of Coiled-coil domain-containing protein 43 (CCDC43) from Homo sapiens (Human).